A 507-amino-acid chain; its full sequence is Probable malate:quinone oxidoreductase 2 (507 aa).

This sequence belongs to the MQO family. FAD is required as a cofactor.

It catalyses the reaction (S)-malate + a quinone = a quinol + oxaloacetate. It functions in the pathway carbohydrate metabolism; tricarboxylic acid cycle; oxaloacetate from (S)-malate (quinone route): step 1/1. In Pseudomonas aeruginosa (strain ATCC 15692 / DSM 22644 / CIP 104116 / JCM 14847 / LMG 12228 / 1C / PRS 101 / PAO1), this protein is Probable malate:quinone oxidoreductase 2.